The primary structure comprises 191 residues: Thymidylate kinase (191 aa).

Residue 7-14 participates in ATP binding; the sequence is GVDGVGKS.

Belongs to the thymidylate kinase family.

The catalysed reaction is dTMP + ATP = dTDP + ADP. Functionally, phosphorylation of dTMP to form dTDP in both de novo and salvage pathways of dTTP synthesis. This Helicobacter pylori (strain HPAG1) protein is Thymidylate kinase.